The chain runs to 446 residues: Protein IQ-DOMAIN 19 (446 aa).

The interval 93 to 140 (IPGTPKEKRRWSFRRSSATGPPPPACAITLKDSPPPPPPPPPPPPLQQ) is disordered. A compositionally biased stretch (pro residues) spans 125-139 (SPPPPPPPPPPPPLQ). IQ domains are found at residues 163–191 (EEFA…GLVK) and 192–214 (LQAL…CMQA). A calmodulin-binding region spans residues 214 to 231 (ALITLQAKAREQRIRMIG). Residues 332–345 (QSSKAKARSQSAPK) are compositionally biased toward low complexity. Residues 332-398 (QSSKAKARSQ…TAKESQQHHH (67 aa)) are disordered. The segment covering 379-392 (QRSSSQLGSNTAKE) has biased composition (polar residues).

Belongs to the IQD family. In terms of assembly, binds to multiple calmodulin (CaM) in the presence of Ca(2+) and CaM-like proteins.

The protein localises to the cytoplasm. Its subcellular location is the cytoskeleton. The protein resides in the cell membrane. May be involved in cooperative interactions with calmodulins or calmodulin-like proteins. Recruits calmodulin proteins to microtubules, thus being a potential scaffold in cellular signaling and trafficking. Acts as a positive regulator of trichome branch initiation. May associate with nucleic acids and regulate gene expression at the transcriptional or post-transcriptional level. This chain is Protein IQ-DOMAIN 19, found in Arabidopsis thaliana (Mouse-ear cress).